The primary structure comprises 406 residues: O-succinylhomoserine sulfhydrylase (406 aa).

Lysine 219 bears the N6-(pyridoxal phosphate)lysine mark.

It belongs to the trans-sulfuration enzymes family. MetZ subfamily. As to quaternary structure, homotetramer. The cofactor is pyridoxal 5'-phosphate.

It catalyses the reaction O-succinyl-L-homoserine + hydrogen sulfide = L-homocysteine + succinate. It participates in amino-acid biosynthesis; L-methionine biosynthesis via de novo pathway; L-homocysteine from O-succinyl-L-homoserine: step 1/1. Functionally, catalyzes the formation of L-homocysteine from O-succinyl-L-homoserine (OSHS) and hydrogen sulfide. The sequence is that of O-succinylhomoserine sulfhydrylase from Mycobacterium tuberculosis (strain CDC 1551 / Oshkosh).